Reading from the N-terminus, the 106-residue chain is Probable glutaredoxin (106 aa).

A Glutaredoxin domain is found at 8 to 106; it reads IVQKITGADP…AKYLDVQFTQ (99 aa). A disulfide bridge links cysteine 28 with cysteine 31.

It belongs to the glutaredoxin family.

It localises to the virion. The chain is Probable glutaredoxin from Acanthamoeba polyphaga mimivirus (APMV).